Reading from the N-terminus, the 320-residue chain is uncharacterized protein (320 aa).

Omega-N-methylarginine is present on Arg-61. Positions 299 to 320 are disordered; it reads LHLQHQKQTSKDAGRQTPERKA. The span at 307 to 320 shows a compositional bias: basic and acidic residues; it reads TSKDAGRQTPERKA. At Thr-315 the chain carries Phosphothreonine.

This is an uncharacterized protein from Mus musculus (Mouse).